Reading from the N-terminus, the 205-residue chain is Dephospho-CoA kinase (205 aa).

Positions 4-203 (KIGITGGIGS…QKIHYLCSAK (200 aa)) constitute a DPCK domain. 12 to 17 (GSGKSV) is an ATP binding site.

Belongs to the CoaE family.

Its subcellular location is the cytoplasm. The enzyme catalyses 3'-dephospho-CoA + ATP = ADP + CoA + H(+). It participates in cofactor biosynthesis; coenzyme A biosynthesis; CoA from (R)-pantothenate: step 5/5. Functionally, catalyzes the phosphorylation of the 3'-hydroxyl group of dephosphocoenzyme A to form coenzyme A. This Bacteroides fragilis (strain ATCC 25285 / DSM 2151 / CCUG 4856 / JCM 11019 / LMG 10263 / NCTC 9343 / Onslow / VPI 2553 / EN-2) protein is Dephospho-CoA kinase.